The chain runs to 237 residues: CD63 antigen (237 aa).

At 1–11 (MAVEGGMKCVK) the chain is on the cytoplasmic side. Residues 12–32 (FLLYVLLLVFCACAVGLIAVG) traverse the membrane as a helical segment. The Extracellular segment spans residues 33-51 (VGTHLVLNQTITHGATPSF). N-linked (GlcNAc...) asparagine glycosylation is present at Asn40. Residues 52–72 (LLPVVIIAVGAFLFLVAFVGC) form a helical membrane-spanning segment. Topologically, residues 73-81 (CGACKENYC) are cytoplasmic. The helical transmembrane segment at 82–102 (LMITFAIFLSLIMLVEVAAAI) threads the bilayer. Residues 103–202 (AGYVFRDKVR…KIAAWLRKNV (100 aa)) lie on the Extracellular side of the membrane. Residues Asn130, Asn150, and Asn171 are each glycosylated (N-linked (GlcNAc...) asparagine). A helical membrane pass occupies residues 203–223 (LVVAAAALGIAFVEILGIVLA). At 224–237 (CCLVKSIRSGYEVM) the chain is on the cytoplasmic side. The short motif at 233 to 237 (GYEVM) is the Lysosomal targeting motif element.

Belongs to the tetraspanin (TM4SF) family. In terms of assembly, interacts with TIMP1 and ITGB1 and recruits TIMP1 to ITGB1. Interacts with CD9. Identified in a complex with CD9 and ITGB3. Interacts with PMEL. Interacts with KDR/VEGFR2; identified in a complex with ITGB1 and KDR/VEGFR2 and is required to recruit KDR to ITGB1 complexes. Interacts with SYT7. Post-translationally, palmitoylated at a low, basal level in unstimulated platelets. The level of palmitoylation increases when platelets are activated by thrombin (in vitro).

It localises to the cell membrane. The protein localises to the lysosome membrane. The protein resides in the late endosome membrane. It is found in the endosome. Its subcellular location is the multivesicular body. It localises to the melanosome. The protein localises to the secreted. The protein resides in the extracellular exosome. It is found in the cell surface. Its function is as follows. Functions as a cell surface receptor for TIMP1 and plays a role in the activation of cellular signaling cascades. Plays a role in the activation of ITGB1 and integrin signaling, leading to the activation of AKT, FAK/PTK2 and MAP kinases. Promotes cell survival, reorganization of the actin cytoskeleton, cell adhesion, spreading and migration, via its role in the activation of AKT and FAK/PTK2. Plays a role in VEGFA signaling via its role in regulating the internalization of KDR/VEGFR2. Plays a role in intracellular vesicular transport processes, and is required for normal trafficking of the PMEL luminal domain that is essential for the development and maturation of melanocytes. Plays a role in the adhesion of leukocytes onto endothelial cells via its role in the regulation of SELP trafficking. May play a role in mast cell degranulation in response to Ms4a2/FceRI stimulation, but not in mast cell degranulation in response to other stimuli. In Bos taurus (Bovine), this protein is CD63 antigen (CD63).